Here is a 342-residue protein sequence, read N- to C-terminus: Tetraacyldisaccharide 4'-kinase (342 aa).

Residue 68-75 participates in ATP binding; it reads TVGGTGKT.

Belongs to the LpxK family.

The enzyme catalyses a lipid A disaccharide + ATP = a lipid IVA + ADP + H(+). Its pathway is glycolipid biosynthesis; lipid IV(A) biosynthesis; lipid IV(A) from (3R)-3-hydroxytetradecanoyl-[acyl-carrier-protein] and UDP-N-acetyl-alpha-D-glucosamine: step 6/6. In terms of biological role, transfers the gamma-phosphate of ATP to the 4'-position of a tetraacyldisaccharide 1-phosphate intermediate (termed DS-1-P) to form tetraacyldisaccharide 1,4'-bis-phosphate (lipid IVA). The sequence is that of Tetraacyldisaccharide 4'-kinase from Burkholderia pseudomallei (strain K96243).